We begin with the raw amino-acid sequence, 185 residues long: Elongation factor P (185 aa).

The protein belongs to the elongation factor P family.

The protein localises to the cytoplasm. Its pathway is protein biosynthesis; polypeptide chain elongation. Involved in peptide bond synthesis. Stimulates efficient translation and peptide-bond synthesis on native or reconstituted 70S ribosomes in vitro. Probably functions indirectly by altering the affinity of the ribosome for aminoacyl-tRNA, thus increasing their reactivity as acceptors for peptidyl transferase. This is Elongation factor P from Microcystis aeruginosa (strain NIES-843 / IAM M-2473).